Here is a 63-residue protein sequence, read N- to C-terminus: Small ribosomal subunit protein eS17 (63 aa).

This sequence belongs to the eukaryotic ribosomal protein eS17 family.

This chain is Small ribosomal subunit protein eS17, found in Methanosphaerula palustris (strain ATCC BAA-1556 / DSM 19958 / E1-9c).